The chain runs to 433 residues: Enolase (433 aa).

Gln167 provides a ligand contact to (2R)-2-phosphoglycerate. The Proton donor role is filled by Glu209. Positions 246, 291, and 318 each coordinate Mg(2+). Positions 343, 372, 373, and 394 each coordinate (2R)-2-phosphoglycerate. The active-site Proton acceptor is the Lys343.

This sequence belongs to the enolase family. In terms of assembly, component of the RNA degradosome, a multiprotein complex involved in RNA processing and mRNA degradation. Requires Mg(2+) as cofactor.

It localises to the cytoplasm. The protein resides in the secreted. The protein localises to the cell surface. The catalysed reaction is (2R)-2-phosphoglycerate = phosphoenolpyruvate + H2O. Its pathway is carbohydrate degradation; glycolysis; pyruvate from D-glyceraldehyde 3-phosphate: step 4/5. Catalyzes the reversible conversion of 2-phosphoglycerate (2-PG) into phosphoenolpyruvate (PEP). It is essential for the degradation of carbohydrates via glycolysis. The polypeptide is Enolase (Histophilus somni (strain 129Pt) (Haemophilus somnus)).